The primary structure comprises 467 residues: MEKISRTKIVDLMKREDFGAMVNVKGWVRTRRGSKQVNFIALNDGSTINNVQVVVDLANFDEEMLKQITTGACLSVNGVLTESVGAGQKAEVQAREIEVLGTCDNTYPLQKKGHSMEFLREIAHLRPRTNTFGAVFRIRHNMAIAIHKFFHEKGFFYFHTPIITASDCEGAGQMFQVTTMNLYDLKKDENGSIVYDDDFFGKQASLTVSGQLEGELAATALGAIYTFGPTFRAENSNTPRHLAEFWMIEPEVAFNEIQENMDLAEEFIKYCVRWALDNCADDVKFLNDMFDKGLIERLEGVLKEDFVRLPYTEGIKILEEAVAKGHKFEFPVYWGVDLASEHERYLVEDHFKRPVILTDYPKEIKAFYMKQNEDGKTVRAMDVLFPKIGEIIGGSERESDYNKLMMRIEEMHIPMKDMWWYLDTRKFGTCPHSGFGLGFERLLLFVTGMSNIRDVIPFPRTPRNADF.

Belongs to the class-II aminoacyl-tRNA synthetase family. As to quaternary structure, homodimer.

It is found in the cytoplasm. The catalysed reaction is tRNA(Asn) + L-asparagine + ATP = L-asparaginyl-tRNA(Asn) + AMP + diphosphate + H(+). The sequence is that of Asparagine--tRNA ligase from Bacteroides fragilis (strain YCH46).